Here is a 359-residue protein sequence, read N- to C-terminus: 1-deoxy-D-xylulose 5-phosphate reductoisomerase (359 aa).

NADPH-binding residues include Thr7, Gly8, Ser9, Ile10, Gly31, Lys32, Asn33, and Asn111. Residue Lys112 participates in 1-deoxy-D-xylulose 5-phosphate binding. An NADPH-binding site is contributed by Glu113. Residue Asp131 participates in Mn(2+) binding. 1-deoxy-D-xylulose 5-phosphate-binding residues include Ser132, Glu133, Ser155, and His178. Residue Glu133 participates in Mn(2+) binding. Residue Gly184 coordinates NADPH. 1-deoxy-D-xylulose 5-phosphate-binding residues include Ser191, Asn196, Lys197, and Glu200. Glu200 lines the Mn(2+) pocket.

Belongs to the DXR family. Mg(2+) serves as cofactor. It depends on Mn(2+) as a cofactor.

The enzyme catalyses 2-C-methyl-D-erythritol 4-phosphate + NADP(+) = 1-deoxy-D-xylulose 5-phosphate + NADPH + H(+). Its pathway is isoprenoid biosynthesis; isopentenyl diphosphate biosynthesis via DXP pathway; isopentenyl diphosphate from 1-deoxy-D-xylulose 5-phosphate: step 1/6. Catalyzes the NADPH-dependent rearrangement and reduction of 1-deoxy-D-xylulose-5-phosphate (DXP) to 2-C-methyl-D-erythritol 4-phosphate (MEP). This chain is 1-deoxy-D-xylulose 5-phosphate reductoisomerase, found in Campylobacter lari (strain RM2100 / D67 / ATCC BAA-1060).